The primary structure comprises 381 residues: MAQDFTVTPWEVKGKVDYDKLIVQFGTQKMTSELKERAKRAINDELHVMLRRDVFFSHRDFDLILNDYEKGNGFFLYTGRAPSLGMHIGHLIPFIFTKWLQEKFKVNVYIEITDDEKFLRNVDYTLDQTKEWSYENILDIIAVGFDPNKTFIFQDTEYIKNMYPLSVKIAKKLTFNEVRATFGLDTSSNIGIIFYPALQIVPTMFEKRRCLIPAGIDQDPYWRLQRDIAESLGYFKAAQIHSKFLPPLTGPEGKMSSSQPETAIYLTDDPKTVERKIMKYAFSGGQATVELHRKYGGNPDIDVAFQWLYMFFEPDDQRIRKIEEDYRSGAMLTGELKQILVDKLNAFLEEHREKREKAKDLVNVFKFDGDLARDMWKRIHV.

The 'HIGH' region motif lies at 82–90 (PSLGMHIGH). The 'KMSKS' region motif lies at 254–258 (KMSSS).

The protein belongs to the class-I aminoacyl-tRNA synthetase family.

The protein localises to the cytoplasm. The enzyme catalyses tRNA(Trp) + L-tryptophan + ATP = L-tryptophyl-tRNA(Trp) + AMP + diphosphate + H(+). The protein is Tryptophan--tRNA ligase of Sulfolobus acidocaldarius (strain ATCC 33909 / DSM 639 / JCM 8929 / NBRC 15157 / NCIMB 11770).